A 414-amino-acid polypeptide reads, in one-letter code: Cytochrome b (414 aa).

2 helical membrane passes run 40 to 60 and 84 to 104; these read FFGS…VWLA and GWLI…VIYL. Residues histidine 91 and histidine 105 each contribute to the heme b site. 8 consecutive transmembrane segments (helical) span residues 121–141, 154–174, 188–208, 252–272, 294–314, 317–337, 351–371, and 378–398; these read LLWM…FFGY, QVIV…SVWV, FFAF…LHIV, LMGV…NPTM, IAPV…PPMY, QFPG…LPWL, IFKW…WLGI, and YTLL…LMPI. The heme b site is built by histidine 192 and histidine 206.

This sequence belongs to the cytochrome b family. In terms of assembly, the main subunits of complex b-c1 are: cytochrome b, cytochrome c1 and the Rieske protein. Requires heme b as cofactor.

The protein resides in the cell membrane. Functionally, component of the ubiquinol-cytochrome c reductase complex (complex III or cytochrome b-c1 complex), which is a respiratory chain that generates an electrochemical potential coupled to ATP synthesis. This is Cytochrome b (petB) from Allochromatium vinosum (strain ATCC 17899 / DSM 180 / NBRC 103801 / NCIMB 10441 / D) (Chromatium vinosum).